A 444-amino-acid chain; its full sequence is Tol-Pal system protein TolB (444 aa).

Positions 1-18 (MKNIIYCILLLFSFNSYA) are cleaved as a signal peptide.

It belongs to the TolB family. As to quaternary structure, the Tol-Pal system is composed of five core proteins: the inner membrane proteins TolA, TolQ and TolR, the periplasmic protein TolB and the outer membrane protein Pal. They form a network linking the inner and outer membranes and the peptidoglycan layer.

Its subcellular location is the periplasm. Functionally, part of the Tol-Pal system, which plays a role in outer membrane invagination during cell division and is important for maintaining outer membrane integrity. This chain is Tol-Pal system protein TolB, found in Rickettsia bellii (strain OSU 85-389).